We begin with the raw amino-acid sequence, 325 residues long: Tartrate-resistant acid phosphatase type 5 (325 aa).

A signal peptide spans 1–21; it reads MDMWTALLILQALLLPSLADG. Fe cation contacts are provided by Asp33, Asp71, Tyr74, and Asn110. 2 N-linked (GlcNAc...) asparagine glycosylation sites follow: Asn116 and Asn147. An intrachain disulfide couples Cys161 to Cys219. Positions 205, 240, and 242 each coordinate Fe cation.

The protein belongs to the metallophosphoesterase superfamily. Purple acid phosphatase family. As to quaternary structure, exists either as monomer or, after proteolytic processing, as a dimer of two chains linked by disulfide bond(s). It depends on Fe cation as a cofactor.

The protein localises to the lysosome. It carries out the reaction a phosphate monoester + H2O = an alcohol + phosphate. Functionally, involved in osteopontin/bone sialoprotein dephosphorylation. Its expression seems to increase in certain pathological states such as Gaucher and Hodgkin diseases, the hairy cell, the B-cell, and the T-cell leukemias. The sequence is that of Tartrate-resistant acid phosphatase type 5 (ACP5) from Homo sapiens (Human).